A 466-amino-acid chain; its full sequence is MLPSTVQTLTLLLTSGGVLLSLYVSASLSYLLYSDVLLKFSSTKTTAPTMSLECTNASNAQTVNHSATKEMTFPPPEPEWTYPRLSCQGSTFQKALLISPHRFGEIKGNSAPLIIREPFVACGPKECRHFALTHYAAQPGGYYNGTRKDRNKLRHLVSVKLGKIPTVENSIFHMAAWSGSACHDGREWTYIGVDGPDNDALVKIKYGEAYTDTYHSYAHNILRTQESACNCIGGDCYLMITDGSASGISKCRFLKIREGRIIKEILPTGRVEHTEECTCGFASNKTIECACRDNSYTAKRPFVKLNVETDTAEIRLMCTKTYLDTPRPDDGSIAGPCESNGDKWLGGIKGGFVHQRMASKIGRWYSRTMSKTNRMGMELYVKYDGDPWTDSDALTLSGVMVSIEEPGWYSFGFEIKDKKCDVPCIGIEMVHDGGKDTWHSAATAIYCLMGSGQLLWDTVTGVDMAL.

Residues 1 to 8 are Intravirion-facing; that stretch reads MLPSTVQT. A helical transmembrane segment spans residues 9–31; sequence LTLLLTSGGVLLSLYVSASLSYL. Positions 13–35 are involved in apical transport and lipid raft association; the sequence is LTSGGVLLSLYVSASLSYLLYSD. The Virion surface portion of the chain corresponds to 32–466; sequence LYSDVLLKFS…DTVTGVDMAL (435 aa). A hypervariable stalk region region spans residues 38–86; sequence LKFSSTKTTAPTMSLECTNASNAQTVNHSATKEMTFPPPEPEWTYPRLS. 2 N-linked (GlcNAc...) asparagine; by host glycosylation sites follow: N56 and N64. 8 cysteine pairs are disulfide-bonded: C87–C420, C122–C127, C182–C229, C231–C236, C277–C291, C279–C289, C318–C337, and C424–C447. A head of neuraminidase region spans residues 89–466; sequence GSTFQKALLI…DTVTGVDMAL (378 aa). Substrate is bound at residue R116. The N-linked (GlcNAc...) asparagine; by host glycan is linked to N144. D149 (proton donor/acceptor) is an active-site residue. R150 is a binding site for substrate. 275–276 is a binding site for substrate; it reads EE. N284 carries an N-linked (GlcNAc...) asparagine; by host glycan. R292 lines the substrate pocket. Residues D293, T297, D324, and G346 each coordinate Ca(2+). R374 contributes to the substrate binding site. Y409 serves as the catalytic Nucleophile.

It belongs to the glycosyl hydrolase 34 family. In terms of assembly, homotetramer. Requires Ca(2+) as cofactor. Post-translationally, N-glycosylated.

It is found in the virion membrane. The protein localises to the host apical cell membrane. The catalysed reaction is Hydrolysis of alpha-(2-&gt;3)-, alpha-(2-&gt;6)-, alpha-(2-&gt;8)- glycosidic linkages of terminal sialic acid residues in oligosaccharides, glycoproteins, glycolipids, colominic acid and synthetic substrates.. With respect to regulation, inhibited by the neuraminidase inhibitors zanamivir (Relenza) and oseltamivir (Tamiflu). These drugs interfere with the release of progeny virus from infected cells and are effective against all influenza strains. Resistance to neuraminidase inhibitors is quite rare. Functionally, catalyzes the removal of terminal sialic acid residues from viral and cellular glycoconjugates. Cleaves off the terminal sialic acids on the glycosylated HA during virus budding to facilitate virus release. Additionally helps virus spread through the circulation by further removing sialic acids from the cell surface. These cleavages prevent self-aggregation and ensure the efficient spread of the progeny virus from cell to cell. Otherwise, infection would be limited to one round of replication. Described as a receptor-destroying enzyme because it cleaves a terminal sialic acid from the cellular receptors. May facilitate viral invasion of the upper airways by cleaving the sialic acid moieties on the mucin of the airway epithelial cells. Likely to plays a role in the budding process through its association with lipid rafts during intracellular transport. May additionally display a raft-association independent effect on budding. Plays a role in the determination of host range restriction on replication and virulence. Sialidase activity in late endosome/lysosome traffic seems to enhance virus replication. This is Neuraminidase from Influenza B virus (strain B/Lee/1940).